Reading from the N-terminus, the 371-residue chain is Phospho-N-acetylmuramoyl-pentapeptide-transferase (371 aa).

Transmembrane regions (helical) follow at residues 19–39 (LYWL…IYSG), 48–68 (IVAP…WAVP), 95–115 (TMGG…WVAA), 119–139 (NLLE…VGWF), 155–175 (AKLR…WLFL), 180–200 (ISGL…FLAI), 227–247 (AIAF…LMIF), 284–304 (AVGL…LFLV), and 349–369 (VVST…GLNA).

Belongs to the glycosyltransferase 4 family. MraY subfamily. Mg(2+) serves as cofactor.

The protein resides in the cell inner membrane. It carries out the reaction UDP-N-acetyl-alpha-D-muramoyl-L-alanyl-gamma-D-glutamyl-meso-2,6-diaminopimeloyl-D-alanyl-D-alanine + di-trans,octa-cis-undecaprenyl phosphate = di-trans,octa-cis-undecaprenyl diphospho-N-acetyl-alpha-D-muramoyl-L-alanyl-D-glutamyl-meso-2,6-diaminopimeloyl-D-alanyl-D-alanine + UMP. Its pathway is cell wall biogenesis; peptidoglycan biosynthesis. In terms of biological role, catalyzes the initial step of the lipid cycle reactions in the biosynthesis of the cell wall peptidoglycan: transfers peptidoglycan precursor phospho-MurNAc-pentapeptide from UDP-MurNAc-pentapeptide onto the lipid carrier undecaprenyl phosphate, yielding undecaprenyl-pyrophosphoryl-MurNAc-pentapeptide, known as lipid I. The sequence is that of Phospho-N-acetylmuramoyl-pentapeptide-transferase from Acaryochloris marina (strain MBIC 11017).